Here is a 707-residue protein sequence, read N- to C-terminus: Nucleolin 2 (707 aa).

The segment at 1–446 (MGKSSKKSAV…TPASNQNQAT (446 aa)) is disordered. 2 stretches are compositionally biased toward basic and acidic residues: residues 30-40 (RNAEDEIEKAV) and 47-60 (TVREKVVPSKEEAK). Acidic residues-rich tracts occupy residues 75-85 (SSEEDSSESEE), 108-120 (SSDDSSDDSSSDD), and 144-153 (DSSDESLSDD). The segment covering 158–170 (KPAAPLKKPVALA) has biased composition (low complexity). 3 stretches are compositionally biased toward acidic residues: residues 219-232 (DSSDSDSDSESDED), 248-263 (SESSDSESDSDSDDEA), and 271-287 (ESSDSSDSDSESESDSD). Residues 300–311 (LTKDTKKGQSKD) show a composition bias toward basic and acidic residues. Residues 312-326 (ESEDSSDESSEESGD) are compositionally biased toward acidic residues. Positions 336-347 (STTSGTTKPSPK) are enriched in low complexity. The span at 355-370 (SDDESDEDDSSDESSD) shows a compositional bias: acidic residues. The span at 376-394 (KQTQAKKQAPVAQESSSSD) shows a compositional bias: low complexity. Over residues 395-406 (ESSEEDSDMESD) the composition is skewed to acidic residues. Positions 407–417 (EPAKTPQKKET) are enriched in basic and acidic residues. Residues 420–429 (SVGSNKSATK) are compositionally biased toward polar residues. One can recognise an RRM 1 domain in the interval 449–525 (KTLFVGNLPY…RPVRLDLARE (77 aa)). Disordered regions lie at residues 527 to 546 (GAYTPGSGRDNSSFKKPAQS) and 629 to 707 (RPRP…GDDD). The RRM 2 domain occupies 549 to 630 (NTIFIKGFDT…YSLYVDEARP (82 aa)). The segment covering 657–681 (GRGDGSRGRGDRGRGRGFGRGDRGH) has biased composition (basic and acidic residues).

The protein resides in the nucleus. The protein localises to the nucleolus. Involved in pre-rRNA processing and ribosome assembly. The sequence is that of Nucleolin 2 from Oryza sativa subsp. japonica (Rice).